Reading from the N-terminus, the 1434-residue chain is Nitric oxide synthase 1 (1434 aa).

Residues 1 to 205 (MEDHMFGVQQ…LQGRGENNEL (205 aa)) form an interaction with NOSIP region. The 83-residue stretch at 17–99 (SVRLFKRKVG…ETHVVLILRG (83 aa)) folds into the PDZ domain. 2 disordered regions span residues 112–192 (TGDG…KKAT) and 276–302 (NNPYSEKEQPPTSGKQSPTKNGSPSKC). Positions 163 to 245 (YDDGQEAGSL…MGIQVDRDLD (83 aa)) are interaction with DYNLL1/PIN. The segment covering 285–299 (PPTSGKQSPTKNGSP) has biased composition (polar residues). Position 339 (serine 339) interacts with (6R)-L-erythro-5,6,7,8-tetrahydrobiopterin. Cysteine 420 is a binding site for heme b. The L-arginine site is built by glutamine 483, tryptophan 592, tyrosine 593, and glutamate 597. Positions 682, 683, and 696 each coordinate (6R)-L-erythro-5,6,7,8-tetrahydrobiopterin. Tyrosine 711 contributes to the heme b binding site. The interval 730-750 (KRRAIGFKKLAEAVKFSAKLM) is calmodulin-binding. Positions 760-940 (ATILYATETG…AFRTWAKKVF (181 aa)) constitute a Flavodoxin-like domain. FMN is bound by residues threonine 766, glutamate 767, threonine 768, lysine 770, serine 771, serine 812, threonine 813, and glycine 817. Serine 852, serine 862, and serine 863 each carry phosphoserine. Serine 891, histidine 896, cysteine 898, glutamate 924, and glutamine 928 together coordinate FMN. The FAD-binding FR-type domain occupies 995–1242 (KRVSAARLLS…VRGAPSFHLP (248 aa)). Arginine 1015 contacts NADP(+). Residues histidine 1037, arginine 1178, tyrosine 1179, tyrosine 1180, serine 1181, threonine 1196, and alanine 1198 each contribute to the FAD site. Serine 1201 serves as a coordination point for NADP(+). The FAD site is built by tyrosine 1202, valine 1215, cysteine 1216, and serine 1217. Residues threonine 1256, arginine 1289, serine 1318, arginine 1319, lysine 1325, tyrosine 1327, glutamine 1329, aspartate 1362, threonine 1403, and arginine 1405 each coordinate NADP(+).

This sequence belongs to the NOS family. Homodimer. Interacts with DLG4; the interaction possibly being prevented by the association between NOS1 and CAPON. Forms a ternary complex with CAPON and RASD1. Forms a ternary complex with CAPON and SYN1. Interacts with ZDHHC23. Interacts with NOSIP; which may impair its synaptic location. Interacts with HTR4. Interacts with SLC6A4. Interacts with VAC14. Interacts (via N-terminal domain) with DLG4 (via N-terminal tandem pair of PDZ domains). Interacts with SLC6A4. Forms a complex with ASL, ASS1 and SLC7A1; the complex regulates cell-autonomous L-arginine synthesis and citrulline recycling while channeling extracellular L-arginine to nitric oxide synthesis pathway. Interacts with DMD; localizes NOS1 to sarcolemma in muscle cells. Interacts with DYNLL1; inhibits the nitric oxide synthase activity. Heme b serves as cofactor. The cofactor is FAD. FMN is required as a cofactor. Requires (6R)-L-erythro-5,6,7,8-tetrahydrobiopterin as cofactor. In terms of processing, ubiquitinated; mediated by STUB1/CHIP in the presence of Hsp70 and Hsp40 (in vitro). Isoform 1 is ubiquitously expressed: detected in skeletal muscle and brain, also in testis, lung and kidney, and at low levels in heart, adrenal gland and retina. Not detected in the platelets. Isoform 3 is expressed only in testis. Isoform 4 is detected in testis, skeletal muscle, lung, and kidney, at low levels in the brain, but not in the heart and adrenal gland.

Its subcellular location is the cell membrane. The protein resides in the sarcolemma. It localises to the cell projection. The protein localises to the dendritic spine. The catalysed reaction is 2 L-arginine + 3 NADPH + 4 O2 + H(+) = 2 L-citrulline + 2 nitric oxide + 3 NADP(+) + 4 H2O. Stimulated by calcium/calmodulin. Inhibited by DYNLL1 that prevents the dimerization of the protein. Inhibited by NOSIP. Its function is as follows. Produces nitric oxide (NO) which is a messenger molecule with diverse functions throughout the body. In the brain and peripheral nervous system, NO displays many properties of a neurotransmitter. Probably has nitrosylase activity and mediates cysteine S-nitrosylation of cytoplasmic target proteins such SRR. This is Nitric oxide synthase 1 from Homo sapiens (Human).